A 223-amino-acid chain; its full sequence is Alpha-enolase (223 aa).

Residue Ser-8 participates in Mg(2+) binding. Tyr-12 bears the Phosphotyrosine mark. Lys-25 bears the N6-acetyllysine mark. Glu-39 contacts substrate. At Lys-61 the chain carries N6-acetyllysine. Catalysis depends on Glu-69, which acts as the Proton donor. At Lys-87 the chain carries N6-acetyllysine; alternate. N6-malonyllysine; alternate is present on Lys-87. Residue Lys-87 is modified to N6-succinyllysine; alternate. Residues Asp-99 and Asp-119 each coordinate Mg(2+). Asp-119 lines the substrate pocket. N6-acetyllysine occurs at positions 133 and 141. The active-site Proton acceptor is the Lys-141. Substrate is bound by residues Ser-168 to Ser-171 and Lys-192. The interval Tyr-202–Lys-223 is required for interaction with PLG. N6-acetyllysine; alternate is present on Lys-215. The residue at position 215 (Lys-215) is an N6-malonyllysine; alternate. Lys-215 carries the N6-succinyllysine; alternate modification.

This sequence belongs to the enolase family. In terms of assembly, mammalian enolase is composed of 3 isozyme subunits, alpha, beta and gamma, which can form homodimers or heterodimers which are cell-type and development-specific. ENO1 interacts with PLG in the neuronal plasma membrane and promotes its activation. The C-terminal lysine is required for this binding. Interacts with ENO4 and PGAM2. Interacts with CMTM6. The cofactor is Mg(2+). In terms of processing, ISGylated. Lysine 2-hydroxyisobutyrylation (Khib) by p300/EP300 activates the phosphopyruvate hydratase activity.

The protein resides in the cytoplasm. Its subcellular location is the cell membrane. The catalysed reaction is (2R)-2-phosphoglycerate = phosphoenolpyruvate + H2O. It participates in carbohydrate degradation; glycolysis; pyruvate from D-glyceraldehyde 3-phosphate: step 4/5. Glycolytic enzyme the catalyzes the conversion of 2-phosphoglycerate to phosphoenolpyruvate. In addition to glycolysis, involved in various processes such as growth control, hypoxia tolerance and allergic responses. May also function in the intravascular and pericellular fibrinolytic system due to its ability to serve as a receptor and activator of plasminogen on the cell surface of several cell-types such as leukocytes and neurons. Stimulates immunoglobulin production. This Mesocricetus auratus (Golden hamster) protein is Alpha-enolase.